The primary structure comprises 106 residues: ATP-dependent Clp protease adapter protein ClpS (106 aa).

It belongs to the ClpS family. As to quaternary structure, binds to the N-terminal domain of the chaperone ClpA.

Functionally, involved in the modulation of the specificity of the ClpAP-mediated ATP-dependent protein degradation. The protein is ATP-dependent Clp protease adapter protein ClpS of Escherichia coli O139:H28 (strain E24377A / ETEC).